The primary structure comprises 471 residues: GTPase Der (471 aa).

EngA-type G domains lie at 3-168 (PIVA…PDLS) and 178-353 (VRVA…ANHA). GTP contacts are provided by residues 9-16 (GRPNVGKS), 56-60 (DTGGI), 120-123 (NKVE), 184-191 (GRPNVGKS), 231-235 (DTAGM), and 296-299 (NKWD). Residues 354 to 438 (RRISTRELND…PINLYFRTRE (85 aa)) enclose the KH-like domain.

Belongs to the TRAFAC class TrmE-Era-EngA-EngB-Septin-like GTPase superfamily. EngA (Der) GTPase family. In terms of assembly, associates with the 50S ribosomal subunit.

In terms of biological role, GTPase that plays an essential role in the late steps of ribosome biogenesis. The chain is GTPase Der from Symbiobacterium thermophilum (strain DSM 24528 / JCM 14929 / IAM 14863 / T).